The following is a 560-amino-acid chain: E3 SUMO-protein ligase CBX4 (560 aa).

The involved in interaction with H3C15 and H3C1 stretch occupies residues 1 to 75 (MELPAVGEHV…LMGYRKRGPK (75 aa)). Residues 1 to 539 (MELPAVGEHV…LSEFKPFFGN (539 aa)) are interaction with BMI1. The region spanning 11 to 69 (FAVESIEKKRIRKGRVEYLVKWRGWSPKYNTWEPEENILDPRLLIAFQNRERQEQLMGY) is the Chromo domain. Residues K77, K106, K114, and K125 each participate in a glycyl lysine isopeptide (Lys-Gly) (interchain with G-Cter in SUMO2) cross-link. A disordered region spans residues 92-152 (VLTGLQDSST…PPGKSGKYYY (61 aa)). K149 carries the post-translational modification N6-acetyllysine; alternate. Residue K149 forms a Glycyl lysine isopeptide (Lys-Gly) (interchain with G-Cter in SUMO2); alternate linkage. Glycyl lysine isopeptide (Lys-Gly) (interchain with G-Cter in SUMO2) cross-links involve residues K157, K167, and K178. A Phosphoserine modification is found at S182. Glycyl lysine isopeptide (Lys-Gly) (interchain with G-Cter in SUMO2) cross-links involve residues K191, K205, K212, K223, K249, K268, K278, and K280. The interval 217–243 (AAGAPGKGSEKGPPNGMMPAPKEAVTG) is disordered. 2 stretches are compositionally biased toward basic and acidic residues: residues 281–291 (SGEVAEGEARS) and 298–331 (AADE…REEE). The tract at residues 281-404 (SGEVAEGEAR…HHHHHHAVGL (124 aa)) is disordered. Glycyl lysine isopeptide (Lys-Gly) (interchain with G-Cter in SUMO2) cross-links involve residues K320, K352, and K365. A compositionally biased stretch (basic residues) spans 380–401 (PSHHPHPHPHHHHHHHHHHHHA). S467 carries the phosphoserine modification. Residue K494 forms a Glycyl lysine isopeptide (Lys-Gly) (interchain with G-Cter in SUMO2); alternate linkage. K494 participates in a covalent cross-link: Glycyl lysine isopeptide (Lys-Gly) (interchain with G-Cter in SUMO); alternate. Position 497 is a phosphothreonine; by HIPK2 (T497). Over residues 509–521 (AAPTTTAEKPPAE) the composition is skewed to low complexity. The segment at 509–528 (AAPTTTAEKPPAEAQDEPAE) is disordered. Positions 531–556 (SEFKPFFGNIIITDVTANCLTVTFKE) are involved in interaction with H3C15 and RNF2. The segment at 540-560 (IIITDVTANCLTVTFKEYVTV) is interaction with RNF2.

Interacts with histone H3-K9Me3. Interacts with CHTOP. Component of a PRC1-like complex. The composition of the PRC1 complex differs between the PRC1 complex in pluripotent embryonic stem cells containing RNF2, CBX7 and PCGF2, and the PRC1 complex in differentiating cells containing RNF2, CBX2, CBX4 and BMI1. Self-associates. Interacts with SUV39H1 and HIPK2. Interacts with CSNK2B. May interact with H3C15, H3C1 and RNF2. Interacts with SUMO1P1/SUMO5. Interacts with PRDM1/Blimp-1. Ubiquitinated. Ubiquitination regulates the function of the Polycomb group (PcG) multiprotein PRC1-like complex. Deubiquitinated by USP26. In terms of processing, phosphorylated on Thr-497 by HIPK2 upon DNA damage. This phosphorylation stimulates E3 SUMO-protein ligase activity and promotes sumoylation on Lys-494, as well as sumoylation of other target proteins, such as HNRNPK. In terms of tissue distribution, ubiquitous.

The protein localises to the nucleus. Its subcellular location is the nucleus speckle. The protein operates within protein modification; protein sumoylation. In terms of biological role, E3 SUMO-protein ligase that catalyzes sumoylation of target proteins by promoting the transfer of SUMO from the E2 enzyme to the substrate. Involved in the sumoylation of HNRNPK, a p53/TP53 transcriptional coactivator, hence indirectly regulates p53/TP53 transcriptional activation resulting in p21/CDKN1A expression. Monosumoylates ZNF131. Component of a Polycomb group (PcG) multiprotein PRC1-like complex, a complex class required to maintain the transcriptionally repressive state of many genes, including Hox genes, throughout development. PcG PRC1 complex acts via chromatin remodeling and modification of histones; it mediates monoubiquitination of histone H2A 'Lys-119', rendering chromatin heritably changed in its expressibility. Binds to histone H3 trimethylated at 'Lys-9' (H3K9me3). Plays a role in the lineage differentiation of the germ layers in embryonic development. The polypeptide is E3 SUMO-protein ligase CBX4 (CBX4) (Homo sapiens (Human)).